A 160-amino-acid polypeptide reads, in one-letter code: Lipoprotein signal peptidase (160 aa).

The next 3 membrane-spanning stretches (helical) occupy residues 6–26, 58–78, and 95–115; these read VWSS…IKYL, LAWL…AFVL, and FALV…HGYV. Residues D117 and D135 contribute to the active site. Residues 127-147 form a helical membrane-spanning segment; sequence SFAVFNLADAFITIGAGLIIL.

The protein belongs to the peptidase A8 family.

The protein resides in the cell inner membrane. It carries out the reaction Release of signal peptides from bacterial membrane prolipoproteins. Hydrolyzes -Xaa-Yaa-Zaa-|-(S,diacylglyceryl)Cys-, in which Xaa is hydrophobic (preferably Leu), and Yaa (Ala or Ser) and Zaa (Gly or Ala) have small, neutral side chains.. It functions in the pathway protein modification; lipoprotein biosynthesis (signal peptide cleavage). This protein specifically catalyzes the removal of signal peptides from prolipoproteins. This Brucella abortus (strain S19) protein is Lipoprotein signal peptidase.